The chain runs to 44 residues: DNA-directed RNA polymerase subunit Rpo12 (44 aa).

Zn(2+) contacts are provided by Cys-8, Cys-22, and Cys-25.

It belongs to the archaeal Rpo12/eukaryotic RPC10 RNA polymerase subunit family. As to quaternary structure, part of the RNA polymerase complex. The cofactor is Zn(2+).

Its subcellular location is the cytoplasm. The enzyme catalyses RNA(n) + a ribonucleoside 5'-triphosphate = RNA(n+1) + diphosphate. Functionally, DNA-dependent RNA polymerase (RNAP) catalyzes the transcription of DNA into RNA using the four ribonucleoside triphosphates as substrates. This Haloquadratum walsbyi (strain DSM 16790 / HBSQ001) protein is DNA-directed RNA polymerase subunit Rpo12.